The sequence spans 387 residues: Solute carrier family 25 protein Shawn (387 aa).

3 Solcar repeats span residues 37–156 (IRPL…FKAR), 179–263 (IPFL…LKSS), and 269–366 (PTFS…GKSF). A run of 6 helical transmembrane segments spans residues 43–63 (VASA…LDVI), 128–148 (LWSG…IYFV), 179–199 (IPFL…VTCV), 235–255 (LWRG…IYWT), 275–295 (FAAG…FDVV), and 337–357 (AIFS…AIMI).

This sequence belongs to the mitochondrial carrier (TC 2.A.29) family.

It is found in the mitochondrion inner membrane. Mitochondrial transporter required for glutathione import into mitochondria. This chain is Solute carrier family 25 protein Shawn, found in Drosophila melanogaster (Fruit fly).